A 188-amino-acid chain; its full sequence is dCTP deaminase (188 aa).

Residues K111–R116, T135–E137, Q156, Y170, and Q180 each bind dCTP. E137 acts as the Proton donor/acceptor in catalysis.

It belongs to the dCTP deaminase family. As to quaternary structure, homotrimer.

It carries out the reaction dCTP + H2O + H(+) = dUTP + NH4(+). It participates in pyrimidine metabolism; dUMP biosynthesis; dUMP from dCTP (dUTP route): step 1/2. Functionally, catalyzes the deamination of dCTP to dUTP. The polypeptide is dCTP deaminase (Thioalkalivibrio sulfidiphilus (strain HL-EbGR7)).